We begin with the raw amino-acid sequence, 428 residues long: Probable mannosyltransferase YUR1 (428 aa).

Residues 1-3 are Cytoplasmic-facing; it reads MAK. Residues 4 to 24 form a helical; Signal-anchor for type II membrane protein membrane-spanning segment; sequence GGSLYIVGIFLPIWTFMIYIF. Positions 25–88 are stem region; sequence GKELFLIRKY…TRQNDSDSFH (64 aa). At 25-428 the chain is on the lumenal side; that stretch reads GKELFLIRKY…YFLKEEQDEI (404 aa). 4 N-linked (GlcNAc...) asparagine glycosylation sites follow: Asn77, Asn82, Asn92, and Asn167. A catalytic region spans residues 89-428; that stretch reads LRENATILML…YFLKEEQDEI (340 aa). The active-site Nucleophile is the Glu313. Residue Asn414 is glycosylated (N-linked (GlcNAc...) asparagine).

It belongs to the glycosyltransferase 15 family.

It is found in the golgi apparatus membrane. The protein operates within protein modification; protein glycosylation. In terms of biological role, possible glycosyltransferase involved in N-linked glycosylation. Transfers an alpha-D-mannosyl residue from GDP-mannose into lipid-linked oligosaccharide, forming an alpha-(1-&gt;2)-D-mannosyl-D-mannose linkage. The sequence is that of Probable mannosyltransferase YUR1 (YUR1) from Saccharomyces cerevisiae (strain ATCC 204508 / S288c) (Baker's yeast).